A 155-amino-acid polypeptide reads, in one-letter code: Protein FAM163B (155 aa).

Residues 6–26 traverse the membrane as a helical segment; it reads VVITGGILATVILLCIIAVLC.

The protein belongs to the FAM163 family.

The protein localises to the membrane. This is Protein FAM163B (fam163b) from Xenopus tropicalis (Western clawed frog).